The sequence spans 219 residues: Endonuclease V (219 aa).

2 residues coordinate Mg(2+): aspartate 41 and aspartate 107.

The protein belongs to the endonuclease V family. Requires Mg(2+) as cofactor.

The protein localises to the cytoplasm. It carries out the reaction Endonucleolytic cleavage at apurinic or apyrimidinic sites to products with a 5'-phosphate.. Its function is as follows. DNA repair enzyme involved in the repair of deaminated bases. Selectively cleaves double-stranded DNA at the second phosphodiester bond 3' to a deoxyinosine leaving behind the intact lesion on the nicked DNA. The polypeptide is Endonuclease V (Desulfurococcus amylolyticus (strain DSM 18924 / JCM 16383 / VKM B-2413 / 1221n) (Desulfurococcus kamchatkensis)).